The following is a 316-amino-acid chain: Transaldolase A (316 aa).

Lys131 serves as the catalytic Schiff-base intermediate with substrate.

This sequence belongs to the transaldolase family. Type 1 subfamily. Homodimer.

It is found in the cytoplasm. It carries out the reaction D-sedoheptulose 7-phosphate + D-glyceraldehyde 3-phosphate = D-erythrose 4-phosphate + beta-D-fructose 6-phosphate. Its pathway is carbohydrate degradation; pentose phosphate pathway; D-glyceraldehyde 3-phosphate and beta-D-fructose 6-phosphate from D-ribose 5-phosphate and D-xylulose 5-phosphate (non-oxidative stage): step 2/3. In terms of biological role, transaldolase is important for the balance of metabolites in the pentose-phosphate pathway. The sequence is that of Transaldolase A from Shigella flexneri.